Consider the following 944-residue polypeptide: Spindle pole body component 110 (944 aa).

Threonine 18 bears the Phosphothreonine mark. Residues 23 to 110 are disordered; that stretch reads IKSKRNTTQT…RKRNLIDDLK (88 aa). Over residues 28–46 the composition is skewed to polar residues; that stretch reads NTTQTQVVSPTKVPNANNG. The Nuclear localization signal motif lies at 54-59; that stretch reads KKRQRR. The residue at position 60 (serine 60) is a Phosphoserine; by MPS1. Phosphothreonine; by MPS1 is present on residues threonine 64 and threonine 68. Over residues 67–78 the composition is skewed to polar residues; it reads STRLFSEASQFD. Serine 80 is modified (phosphoserine). A compositionally biased stretch (basic and acidic residues) spans 96-110; the sequence is NVDKSRKRNLIDDLK. Residues 119–799 adopt a coiled-coil conformation; it reads LKEQEVREHQ…ILNERRKDND (681 aa). Serine 529 is subject to Phosphoserine. 2 short sequence motifs (nuclear localization signal) span residues 726–731 and 742–747; these read KEKYKR and RLRREK. Residues 900 to 927 are calmodulin-binding; the sequence is SFKTVALLVLACVRMKRIAFYRRSDDNR.

It belongs to the SPC110 family. Homodimer. Component of the SPC110 complex containing at least CMD1, SPC29 and SCP110. Interacts with SPC97 and SPC98.

Its subcellular location is the nucleus. It localises to the cytoplasm. The protein localises to the cytoskeleton. It is found in the microtubule organizing center. The protein resides in the spindle pole body. Component of the spindle pole body (SPB) required for the proper execution of spindle pole body (SPB) duplication. Potential role in cross-linking filaments or anchoring other molecules. It is essential for growth. In Saccharomyces cerevisiae (strain YJM789) (Baker's yeast), this protein is Spindle pole body component 110 (SPC110).